The primary structure comprises 304 residues: Mitochondrial glycine transporter (304 aa).

Solcar repeat units follow at residues 25 to 114, 121 to 205, and 215 to 299; these read HPVI…LKQY, PTAL…TKNI, and LIPI…MMAK. A run of 6 helical transmembrane segments spans residues 31-56, 89-115, 127-152, 180-203, 219-245, and 274-292; these read FLCGSISGTCSTLLFQPLDLLKTRLQ, GMSPSIVRCVPGVGIYFGTLYSLKQYF, VMLGVGSRSVAGVCMSPITVIKTRYE, GLTATLLRDAPFSGIYLMFYNQTK, TNFSCGIFAGILASLVTQPADVIKTHM, and GGIPRALRRTLMAAMAWTV.

The protein belongs to the mitochondrial carrier (TC 2.A.29) family. SLC25A38 subfamily. In terms of tissue distribution, preferentially expressed in erythroid cells.

It localises to the mitochondrion inner membrane. It catalyses the reaction glycine(in) = glycine(out). In terms of biological role, mitochondrial glycine transporter that imports glycine into the mitochondrial matrix. Plays an important role in providing glycine for the first enzymatic step in heme biosynthesis, the condensation of glycine with succinyl-CoA to produce 5-aminolevulinate (ALA) in the mitochondrial matrix. Required during erythropoiesis. Plays a role as pro-apoptotic protein that induces caspase-dependent apoptosis. The polypeptide is Mitochondrial glycine transporter (Homo sapiens (Human)).